We begin with the raw amino-acid sequence, 124 residues long: Small ribosomal subunit protein uS12 (124 aa).

A disordered region spans residues 1 to 42 (MPTTQQLIRKGRKTEEETSDAPALEGSPQRRGVCTRVYTTTP). At D89 the chain carries 3-methylthioaspartic acid. The interval 105–124 (AGVEERRQGRSKYGTKKPRE) is disordered. Over residues 113–124 (GRSKYGTKKPRE) the composition is skewed to basic residues.

Belongs to the universal ribosomal protein uS12 family. In terms of assembly, part of the 30S ribosomal subunit. Contacts proteins S8 and S17. May interact with IF1 in the 30S initiation complex.

With S4 and S5 plays an important role in translational accuracy. Its function is as follows. Interacts with and stabilizes bases of the 16S rRNA that are involved in tRNA selection in the A site and with the mRNA backbone. Located at the interface of the 30S and 50S subunits, it traverses the body of the 30S subunit contacting proteins on the other side and probably holding the rRNA structure together. The combined cluster of proteins S8, S12 and S17 appears to hold together the shoulder and platform of the 30S subunit. This Salinibacter ruber (strain DSM 13855 / M31) protein is Small ribosomal subunit protein uS12.